The sequence spans 260 residues: Isoprenyl transferase (260 aa).

Asp-38 is a catalytic residue. Asp-38 contacts Mg(2+). Substrate contacts are provided by residues Gly-39–Arg-42, Trp-43, Arg-51, His-55, and Ser-83–Glu-85. Asn-86 acts as the Proton acceptor in catalysis. Substrate is bound by residues Trp-87, Arg-89, Arg-206, and Arg-212–Ser-214. Mg(2+) is bound at residue Glu-225.

The protein belongs to the UPP synthase family. Homodimer. Requires Mg(2+) as cofactor.

Its function is as follows. Catalyzes the condensation of isopentenyl diphosphate (IPP) with allylic pyrophosphates generating different type of terpenoids. The polypeptide is Isoprenyl transferase (Heliobacterium mobile (Heliobacillus mobilis)).